We begin with the raw amino-acid sequence, 458 residues long: Acetyl-CoA decarbonylase/synthase complex subunit gamma (458 aa).

The 4Fe-4S domain maps to 1–59 (MQVTAMDVYRLLPKTNCGKCNEASCMAFATKLIEKEVTLDDCPQLSGDERQKLENLLAP). 4 residues coordinate [4Fe-4S] cluster: Cys-17, Cys-20, Cys-25, and Cys-42.

As to quaternary structure, heterodimer of delta and gamma chains. The ACDS complex is made up of alpha, epsilon, beta, gamma and delta chains with a probable stoichiometry of (alpha(2)epsilon(2))(4)-beta(8)-(gamma(1)delta(1))(8). Corrinoid is required as a cofactor. It depends on [4Fe-4S] cluster as a cofactor.

It catalyses the reaction 5,6,7,8-tetrahydrosarcinapterin + methyl-Co(III)-[corrinoid Fe-S protein] = 5-methyltetrahydrosarcinapterin + Co(I)-[corrinoid Fe-S protein] + H(+). Its function is as follows. Part of a complex that catalyzes the reversible cleavage of acetyl-CoA, allowing autotrophic growth from CO(2). This Methanothermobacter thermautotrophicus (strain ATCC 29096 / DSM 1053 / JCM 10044 / NBRC 100330 / Delta H) (Methanobacterium thermoautotrophicum) protein is Acetyl-CoA decarbonylase/synthase complex subunit gamma.